Consider the following 560-residue polypeptide: Serine palmitoyltransferase 2 (560 aa).

Residues P65 to L85 form a helical membrane-spanning segment. K377 carries the N6-(pyridoxal phosphate)lysine modification.

Belongs to the class-II pyridoxal-phosphate-dependent aminotransferase family. As to quaternary structure, component of the serine palmitoyltransferase (SPT) complex, which is composed of SPTLC1, SPTLC2 or SPTLC3 and SPTSSA or SPTSSB. The heterodimer consisting of SPTLC1 and SPTLC2/SPTLC3 forms the catalytic core of the enzyme, while SPTSSA or SPTSSB subunits determine substrate specificity. SPT also interacts with ORMDL proteins, especially ORMDL3, which negatively regulate SPT activity in the presence of ceramides. Forms dimers of heterodimers with SPTLC1. The cofactor is pyridoxal 5'-phosphate. In terms of tissue distribution, expressed in a variety of tissues. Expressed in brains cortices (at protein level). Expressed in brown and white adipose tissues. Expressed in liver.

It localises to the endoplasmic reticulum membrane. It catalyses the reaction L-serine + hexadecanoyl-CoA + H(+) = 3-oxosphinganine + CO2 + CoA. It carries out the reaction octadecanoyl-CoA + L-serine + H(+) = 3-oxoeicosasphinganine + CO2 + CoA. The protein operates within lipid metabolism; sphingolipid metabolism. With respect to regulation, SPT complex catalytic activity is negatively regulated by ORMDL proteins, including ORMDL3, in the presence of ceramides. This mechanism allows to maintain ceramide levels at sufficient concentrations for the production of complex sphingolipids, but which prevents the accumulation of ceramides to levels that trigger apoptosis. Its function is as follows. Component of the serine palmitoyltransferase multisubunit enzyme (SPT) that catalyzes the initial and rate-limiting step in sphingolipid biosynthesis by condensing L-serine and activated acyl-CoA (most commonly palmitoyl-CoA) to form long-chain bases. The SPT complex is composed of SPTLC1, SPTLC2 or SPTLC3 and SPTSSA or SPTSSB. Within this complex, the heterodimer consisting of SPTLC1 and SPTLC2/SPTLC3 forms the catalytic core. The composition of the serine palmitoyltransferase (SPT) complex determines the substrate preference. The SPTLC1-SPTLC2-SPTSSA complex shows a strong preference for C16-CoA substrate, while the SPTLC1-SPTLC3-SPTSSA isozyme uses both C14-CoA and C16-CoA as substrates, with a slight preference for C14-CoA. The SPTLC1-SPTLC2-SPTSSB complex shows a strong preference for C18-CoA substrate, while the SPTLC1-SPTLC3-SPTSSB isozyme displays an ability to use a broader range of acyl-CoAs, without apparent preference. Crucial for adipogenesis. This Mus musculus (Mouse) protein is Serine palmitoyltransferase 2.